The primary structure comprises 672 residues: Transcriptional regulator Kaiso (672 aa).

The segment at 1–103 (MESRKLISAT…RSDLLDELIK (103 aa)) is interaction with NCOR1. A self-association region spans residues 1–136 (MESRKLISAT…SGTAQDGNTE (136 aa)). Positions 32–94 (CDVTVIVEDR…IYSSKIVRVR (63 aa)) constitute a BTB domain. Glycyl lysine isopeptide (Lys-Gly) (interchain with G-Cter in SUMO2) cross-links involve residues lysine 151 and lysine 153. Phosphothreonine is present on threonine 251. The interval 298 to 573 (LPNHMPSSIN…FMSSHIKSVH (276 aa)) is interaction with CBFA2T3. The disordered stretch occupies residues 325–354 (KANEEEEEEIIDDDDDTISSSPDSAVSNTS). Positions 328-341 (EEEEEEIIDDDDDT) are enriched in acidic residues. Glycyl lysine isopeptide (Lys-Gly) (interchain with G-Cter in SUMO2) cross-links involve residues lysine 390, lysine 407, lysine 414, lysine 449, lysine 465, lysine 474, and lysine 479. Positions 454–672 (EGEARLENEI…EFEFIIPESY (219 aa)) are interaction with CTNND1. The Nuclear localization signal signature appears at 471–480 (MANKRMKVKH). 3 C2H2-type zinc fingers span residues 494–516 (YICI…FNIH), 522–544 (YPCR…EIHH), and 550–573 (YQCL…KSVH). The required for DNA-binding stretch occupies residues 514–638 (NIHSWEKKYP…TTTSTQNKPM (125 aa)). Residues lysine 539, lysine 570, lysine 582, lysine 611, and lysine 618 each participate in a glycyl lysine isopeptide (Lys-Gly) (interchain with G-Cter in SUMO2) cross-link. Positions 616–635 (GYKVDTGKEPPVGTTTSTQN) are disordered.

In terms of assembly, self-associates. Interacts with CTNND2. Interacts with CTNND1, and this interaction inhibits binding to both methylated and non-methylated DNA. Interacts with NCOR1. Interacts with KPNA2/RCH1, which may mediate nuclear import of this protein. Interacts with CBFA2T3. In terms of tissue distribution, expressed in vascular endothelium.

It localises to the nucleus. Its subcellular location is the cytoplasm. In terms of biological role, transcriptional regulator with bimodal DNA-binding specificity. Binds to methylated CpG dinucleotides in the consensus sequence 5'-CGCG-3' and also binds to the non-methylated consensus sequence 5'-CTGCNA-3' also known as the consensus kaiso binding site (KBS). Recruits the N-CoR repressor complex to promote histone deacetylation and the formation of repressive chromatin structures in target gene promoters. May contribute to the repression of target genes of the Wnt signaling pathway. May also activate transcription of a subset of target genes by the recruitment of CTNND2. Represses expression of MMP7 in conjunction with transcriptional corepressors CBFA2T3, CBFA2T2 and RUNX1T1. The protein is Transcriptional regulator Kaiso (ZBTB33) of Homo sapiens (Human).